The chain runs to 328 residues: Phosphate acyltransferase (328 aa).

Belongs to the PlsX family. Homodimer. Probably interacts with PlsY.

The protein resides in the cytoplasm. It catalyses the reaction a fatty acyl-[ACP] + phosphate = an acyl phosphate + holo-[ACP]. It participates in lipid metabolism; phospholipid metabolism. Its function is as follows. Catalyzes the reversible formation of acyl-phosphate (acyl-PO(4)) from acyl-[acyl-carrier-protein] (acyl-ACP). This enzyme utilizes acyl-ACP as fatty acyl donor, but not acyl-CoA. In Staphylococcus aureus (strain USA300), this protein is Phosphate acyltransferase.